The sequence spans 369 residues: MSGYIPSYLDKDELCVVCGDKATGYHYRCITCEGCKGFFRRTIQKNLHPTYSCKYEGKCVIDKVTRNQCQECRFKKCIFVGMATDLVLDDSKRLAKRKLIEENREKRRREELQKTIGHKPEPTDEEWELIKIVTEAHVATNAQGSHWKQKRKFLPEDIGQAPIVNAPEGGKVDLEAFSQFTKIITPAITRVVDFAKKLPMFCELPCEDQIILLKGCCMEIMSLRAAVRYDPESETLTLNGEMAVTRGQLKNGGLGVVSDAIFDLGMSLSSFNLDDTEVALLQAVLLMSSDRPGLVCVERIEKCQEGFLLAFEHYINYRKHHVAHFWPKLLMKVTDLRMIGACHASRFLHMKVECPTELFPPLFLEVFED.

The tract at residues 1–14 is modulating; sequence MSGYIPSYLDKDEL. 8 residues coordinate Zn(2+): C15, C18, C32, C35, C53, C59, C69, and C72. 2 NR C4-type zinc fingers span residues 15-35 and 53-77; these read CVVC…CEGC and CKYE…FKKC. Positions 15-89 form a DNA-binding region, nuclear receptor; the sequence is CVVCGDKATG…VGMATDLVLD (75 aa). Positions 125 to 369 constitute an NR LBD domain; it reads EEWELIKIVT…PPLFLEVFED (245 aa). Positions 190, 239, and 343 each coordinate 3,3',5-triiodo-L-thyronine. 3 residues coordinate L-thyroxine: R190, N239, and H343.

It belongs to the nuclear hormone receptor family. NR1 subfamily.

The protein resides in the nucleus. Its function is as follows. Nuclear hormone receptor that can act as a repressor or activator of transcription. High affinity receptor for thyroid hormones, including triiodothyronine and thyroxine. The sequence is that of Thyroid hormone receptor beta (THRB) from Cairina moschata (Muscovy duck).